We begin with the raw amino-acid sequence, 33 residues long: Photosystem II reaction center protein Psb30 (33 aa).

A helical membrane pass occupies residues 8–28 (QLTALAFIVLSGPLVIALLAF).

This sequence belongs to the Psb30/Ycf12 family. PSII is composed of 1 copy each of membrane proteins PsbA, PsbB, PsbC, PsbD, PsbE, PsbF, PsbH, PsbI, PsbJ, PsbK, PsbL, PsbM, PsbT, PsbX, PsbY, PsbZ, Psb30/Ycf12, peripheral proteins of the oxygen-evolving complex and a large number of cofactors. It forms dimeric complexes.

It localises to the plastid. Its subcellular location is the chloroplast thylakoid membrane. A core subunit of photosystem II (PSII), probably helps stabilize the reaction center. The protein is Photosystem II reaction center protein Psb30 of Staurastrum punctulatum (Green alga).